Reading from the N-terminus, the 471-residue chain is Probable pyruvate, phosphate dikinase regulatory protein, chloroplastic (471 aa).

The N-terminal 49 residues, 1 to 49 (MSSSSSTSPRFGSMISAKLASPPPSLLLPPSPRLQGRRLTPPSCTPGTP), are a transit peptide targeting the chloroplast. Residues 1–133 (MSSSSSTSPR…PHPSSDEAAS (133 aa)) form a disordered region. The span at 21–32 (SPPPSLLLPPSP) shows a compositional bias: pro residues. Polar residues predominate over residues 71–88 (GSATTPRSPAQLGSSQLH). Positions 89 to 99 (RWSRARAHRSG) are enriched in basic residues. Residues 100–111 (RRLEWPTIRDRG) are compositionally biased toward basic and acidic residues. 171–178 (HSVNAALG) is a binding site for ADP.

The protein belongs to the pyruvate, phosphate/water dikinase regulatory protein family. PDRP subfamily.

It localises to the plastid. It is found in the chloroplast. The catalysed reaction is N(tele)-phospho-L-histidyl/L-threonyl-[pyruvate, phosphate dikinase] + ADP = N(tele)-phospho-L-histidyl/O-phospho-L-threonyl-[pyruvate, phosphate dikinase] + AMP + H(+). It catalyses the reaction N(tele)-phospho-L-histidyl/O-phospho-L-threonyl-[pyruvate, phosphate dikinase] + phosphate + H(+) = N(tele)-phospho-L-histidyl/L-threonyl-[pyruvate, phosphate dikinase] + diphosphate. Regulated by light/dark exposure. Bifunctional serine/threonine kinase and phosphorylase involved in the dark/light-mediated regulation of PPDK by catalyzing its phosphorylation/dephosphorylation. Dark/light-induced changes in stromal concentrations of the competing ADP and Pi substrates govern the direction of the reaction. In the dark, phosphorylates the catalytic intermediate of PPDK (PPDK-HisP), inactivating it. Light exposure induces the phosphorolysis reaction that reactivates PPDK. In Oryza sativa subsp. indica (Rice), this protein is Probable pyruvate, phosphate dikinase regulatory protein, chloroplastic (PDRP1).